The following is a 331-amino-acid chain: E3 ubiquitin-protein ligase Siah2 (331 aa).

The interval 1–26 (MSRPSSAGGAAGGLGAGKAGGSKHGG) is disordered. Residues 9–26 (GAAGGLGAGKAGGSKHGG) show a composition bias toward gly residues. The segment at 89 to 124 (CPVCFDYVLPPILQCQAGHLVCNQCRQKLSCCPTCR) adopts an RING-type zinc-finger fold. An SBD region spans residues 139–331 (VASTLPFPCK…LGINVTISMC (193 aa)). An SIAH-type zinc finger spans residues 142–202 (TLPFPCKYSS…VMPHLMHAHK (61 aa)). Positions 147, 154, 166, 170, 177, 184, 196, and 201 each coordinate Zn(2+).

This sequence belongs to the SINA (Seven in absentia) family. Homodimer. In terms of tissue distribution, in embryos it is expressed in all blastomeres starting at the mid-blastulla. After 20 somite stage, it is expressed mainly in the posterior part. Expressed in brain, including the eye, the cranial cavity, otic vesicle, optic chiasm and in the gut.

It carries out the reaction S-ubiquitinyl-[E2 ubiquitin-conjugating enzyme]-L-cysteine + [acceptor protein]-L-lysine = [E2 ubiquitin-conjugating enzyme]-L-cysteine + N(6)-ubiquitinyl-[acceptor protein]-L-lysine.. The protein operates within protein modification; protein ubiquitination. Functionally, E3 ubiquitin-protein ligase that mediates ubiquitination and subsequent proteasomal degradation of target proteins. E3 ubiquitin ligases accept ubiquitin from an E2 ubiquitin-conjugating enzyme in the form of a thioester and then directly transfers the ubiquitin to targeted substrates. It probably triggers the ubiquitin-mediated degradation of different substrates. Induces cellular growth arrest by inhibiting the G2/M transition. May play a role in the regulation of the cellular clock function. This Danio rerio (Zebrafish) protein is E3 ubiquitin-protein ligase Siah2 (siah2l).